Consider the following 311-residue polypeptide: N-acetylmuramic acid 6-phosphate etherase (311 aa).

The region spanning 66–229 (VAVRMARGGR…STITMIRLGK (164 aa)) is the SIS domain. Catalysis depends on Glu-94, which acts as the Proton donor. The active site involves Glu-125.

It belongs to the GCKR-like family. MurNAc-6-P etherase subfamily. As to quaternary structure, homodimer.

The enzyme catalyses N-acetyl-D-muramate 6-phosphate + H2O = N-acetyl-D-glucosamine 6-phosphate + (R)-lactate. Its pathway is amino-sugar metabolism; N-acetylmuramate degradation. Specifically catalyzes the cleavage of the D-lactyl ether substituent of MurNAc 6-phosphate, producing GlcNAc 6-phosphate and D-lactate. The polypeptide is N-acetylmuramic acid 6-phosphate etherase (Streptomyces coelicolor (strain ATCC BAA-471 / A3(2) / M145)).